Consider the following 1255-residue polypeptide: ATP-binding cassette sub-family B member 5 (1255 aa).

The helical transmembrane segment at Ile-46–Met-66 threads the bilayer. Residues Leu-51–Thr-351 form the ABC transmembrane type-1 1 domain. N-linked (GlcNAc...) asparagine glycans are attached at residues Asn-86 and Asn-92. The helical transmembrane segment at Ile-104–Val-124 threads the bilayer. Residue Asn-189 is glycosylated (N-linked (GlcNAc...) asparagine). Helical transmembrane passes span Leu-290 to Gly-310 and Ile-314 to Ile-334. N-linked (GlcNAc...) asparagine glycosylation is found at Asn-372 and Asn-391. The 237-residue stretch at Ile-387–Ala-623 folds into the ABC transporter 1 domain. Gly-422–Ser-429 is a binding site for ATP. An N-linked (GlcNAc...) asparagine glycan is attached at Asn-643. A run of 2 helical transmembrane segments spans residues Val-694–Phe-714 and Met-738–Tyr-758. In terms of domain architecture, ABC transmembrane type-1 2 spans Val-694–Lys-981. Asn-790 carries N-linked (GlcNAc...) asparagine glycosylation. Transmembrane regions (helical) follow at residues Leu-814–Trp-836, Leu-841–Phe-863, and Met-955–Trp-975. The ABC transporter 2 domain occupies Leu-1016–Ala-1254. Residue Asn-1036 is glycosylated (N-linked (GlcNAc...) asparagine). Residue Gly-1051–Ser-1058 coordinates ATP. Residues Asn-1105, Asn-1189, and Asn-1229 are each glycosylated (N-linked (GlcNAc...) asparagine).

Belongs to the ABC transporter superfamily. ABCB family. Multidrug resistance exporter (TC 3.A.1.201) subfamily. As to expression, in developing eye, expressed in basal limbal epithelium but not in central cornea. Acts as a marker of limbal stem cells.

It is found in the cell membrane. It catalyses the reaction daunorubicin(in) + ATP + H2O = daunorubicin(out) + ADP + phosphate + H(+). In terms of biological role, energy-dependent efflux transporter responsible for decreased drug accumulation in multidrug-resistant cells. Specifically present in limbal stem cells, where it plays a key role in corneal development and repair. The sequence is that of ATP-binding cassette sub-family B member 5 from Mus musculus (Mouse).